A 718-amino-acid polypeptide reads, in one-letter code: Sodium/myo-inositol cotransporter (718 aa).

Residues 1–9 are Extracellular-facing; that stretch reads MRAVLETAD. Residues 10–29 form a helical membrane-spanning segment; it reads IAIVALYFILVMCIGFFAMW. Residues 30 to 38 lie on the Cytoplasmic side of the membrane; the sequence is KSNRSTVSG. The chain crosses the membrane as a helical span at residues 39–57; sequence YFLAGRSMTWVAIGASLFV. The Extracellular segment spans residues 58 to 86; that stretch reads SNIGSEHFIGLAGSGAASGFAVGAWEFNA. Residues 87–110 form a helical membrane-spanning segment; the sequence is LLLLQLLGWVFIPIYIRSGVYTMP. Residues 111 to 123 are Cytoplasmic-facing; it reads EYLSKRFGGHRIQ. Residues 124-144 traverse the membrane as a helical segment; that stretch reads VYFAALSLILYIFTKLSVDLY. The Extracellular portion of the chain corresponds to 145–157; that stretch reads SGALFIQESLGWN. The helical transmembrane segment at 158 to 183 threads the bilayer; it reads LYVSVILLIGMTALLTVTGGLVAVIY. At 184-186 the chain is on the cytoplasmic side; sequence TDT. Residues 187 to 205 traverse the membrane as a helical segment; sequence LQALLMIVGALTLMIISMM. The Extracellular portion of the chain corresponds to 206-303; that stretch reads EIGGFEEVKR…HAKGSTLMAG (98 aa). Residue Asn-232 is glycosylated (N-linked (GlcNAc...) asparagine). Residues 304–324 form a helical membrane-spanning segment; sequence FLKLLPMFIIVVPGMISRILF. Over 325-353 the chain is Cytoplasmic; that stretch reads ADDIACINPEHCMQVCGSRAGCSNIAYPR. Residues 354 to 376 traverse the membrane as a helical segment; that stretch reads LVMKLVPVGLRGLMMAVMIAALM. The Extracellular segment spans residues 377-406; that stretch reads SDLDSIFNSASTIFTLDVYKLIRRSASSRE. The chain crosses the membrane as a helical span at residues 407–430; the sequence is LMIVGRIFVAFMVVISIAWVPIIV. The Cytoplasmic segment spans residues 431-443; the sequence is EMQGGQMYLYIQE. The chain crosses the membrane as a helical span at residues 444-462; it reads VADYLTPPVAALFLLAIFW. Topologically, residues 463–510 are extracellular; the sequence is KRCNEQGAFYGGMAGFVLGAVRLTLAFAYRAPECDQPDNRPGFIKDIH. The chain crosses the membrane as a helical span at residues 511–532; sequence YMYVATALFWVTGLITVIVSLL. The Cytoplasmic segment spans residues 533–695; that stretch reads TPPPTKEQIR…QMLEEPPQVK (163 aa). Residues Ser-594 and Ser-632 each carry the phosphoserine modification. The helical transmembrane segment at 696 to 716 threads the bilayer; it reads LILNIGLFAVCSLGIFMFVYF. Residues 717–718 are Extracellular-facing; the sequence is SL.

Belongs to the sodium:solute symporter (SSF) (TC 2.A.21) family. In terms of assembly, interacts with KCNQ2 (via the pore module). Interacts with KCNQ1; this interaction is direct. Forms coregulatory complexes with ion channels KCNQ2-KCNQ3 and KCNQ1-KCNE2. As to expression, kidney cortex and medulla.

The protein resides in the apical cell membrane. It localises to the basolateral cell membrane. The catalysed reaction is myo-inositol(out) + 2 Na(+)(out) = myo-inositol(in) + 2 Na(+)(in). The enzyme catalyses scyllo-inositol(out) + 2 Na(+)(out) = scyllo-inositol(in) + 2 Na(+)(in). With respect to regulation, inhibited by phlorizin and phloretin. In terms of biological role, electrogenic Na(+)-coupled sugar symporter that actively transports myo-inositol and its stereoisomer scyllo-inositol across the plasma membrane, with a Na(+) to sugar coupling ratio of 2:1. Maintains myo-inositol concentration gradient that defines cell volume and fluid balance during osmotic stress, in particular in the fetoplacental unit and central nervous system. Forms coregulatory complexes with voltage-gated K(+) ion channels, allosterically altering ion selectivity, voltage dependence and gating kinetics of the channel. In turn, K(+) efflux through the channel forms a local electrical gradient that modulates electrogenic Na(+)-coupled myo-inositol influx through the transporter. Associates with KCNQ1-KCNE2 channel in the apical membrane of choroid plexus epithelium and regulates the myo-inositol gradient between blood and cerebrospinal fluid with an impact on neuron excitability. Associates with KCNQ2-KCNQ3 channel altering ion selectivity, increasing Na(+) and Cs(+) permeation relative to K(+) permeation. Provides myo-inositol precursor for biosynthesis of phosphoinositides such as PI(4,5)P2, thus indirectly affecting the activity of phosphoinositide-dependent ion channels and Ca(2+) signaling upon osmotic stress. Has very low affinity for sugars such as L-fucose and L-xylose, with an affinity about three orders of magnitude lower than myo-inositol. This chain is Sodium/myo-inositol cotransporter (SLC5A3), found in Canis lupus familiaris (Dog).